The primary structure comprises 426 residues: Histidine--tRNA ligase (426 aa).

It belongs to the class-II aminoacyl-tRNA synthetase family.

Its subcellular location is the cytoplasm. The enzyme catalyses tRNA(His) + L-histidine + ATP = L-histidyl-tRNA(His) + AMP + diphosphate + H(+). The protein is Histidine--tRNA ligase of Saccharolobus shibatae (strain ATCC 51178 / DSM 5389 / JCM 8931 / NBRC 15437 / B12) (Sulfolobus shibatae).